A 313-amino-acid chain; its full sequence is Solute carrier family 35 member E3 (313 aa).

Transmembrane regions (helical) follow at residues 14 to 34 (IIAGLLVNLLSSICIVFINKW), 40 to 60 (GFPNMTLTLIHFVMTWLGLFI), 77 to 97 (ILLLALSFCGFVVFTNLSLQS), 100 to 122 (IGTYQLAKVMTTPVIIAIQTMYY), 130 to 146 (IKLTLVPITLGVILNSY), 153 to 173 (LMGMIFATLGVLVTSLYQVWV), 187 to 207 (LLYYQAPMSSAFLLVLVPFFE), 215 to 235 (IFGPWSFLALFMVLLSGVIAF), 252 to 272 (TYNMFGHFKFCITLLGGYVLF), and 275 to 295 (PLSLNQGLGILCTLTGILAYT).

Belongs to the TPT transporter family. SLC35E subfamily.

It is found in the membrane. Functionally, putative transporter. The chain is Solute carrier family 35 member E3 (slc35e3) from Danio rerio (Zebrafish).